The chain runs to 98 residues: uncharacterized protein (98 aa).

This is an uncharacterized protein from Schizosaccharomyces pombe (strain 972 / ATCC 24843) (Fission yeast).